Here is a 32-residue protein sequence, read N- to C-terminus: Periplasmic [NiFe] hydrogenase small subunit (32 aa).

[4Fe-4S] cluster contacts are provided by cysteine 17 and cysteine 20.

The protein belongs to the [NiFe]/[NiFeSe] hydrogenase small subunit family. In terms of assembly, heterodimer of a large and a small subunit. The cofactor is [3Fe-4S] cluster. [4Fe-4S] cluster serves as cofactor.

Its subcellular location is the periplasm. It carries out the reaction 2 Fe(III)-[cytochrome c3] + H2 = 2 Fe(II)-[cytochrome c3] + 2 H(+). The chain is Periplasmic [NiFe] hydrogenase small subunit (hydA) from Desulfovibrio multispirans.